The sequence spans 599 residues: Sulfite reductase [NADPH] flavoprotein alpha-component (599 aa).

One can recognise a Flavodoxin-like domain in the interval 64–202 (ITIISASQTG…AASEWRARVV (139 aa)). FMN contacts are provided by residues 70–75 (SQTGNA), 117–120 (STQG), and 153–162 (LGDSSYEFFC). The FAD-binding FR-type domain maps to 234–448 (DSPLVASLSV…IEHNDNFRLP (215 aa)). Residues Thr-322, Ala-356, 386-389 (RLYS), 404-406 (TVG), Tyr-410, and 419-422 (GGAS) each bind FAD. Residues 519–520 (SR), 525–529 (KVYVQ), and Asp-561 contribute to the NADP(+) site. Tyr-599 provides a ligand contact to FAD.

This sequence belongs to the NADPH-dependent sulphite reductase flavoprotein subunit CysJ family. It in the N-terminal section; belongs to the flavodoxin family. In the C-terminal section; belongs to the flavoprotein pyridine nucleotide cytochrome reductase family. As to quaternary structure, alpha(8)-beta(8). The alpha component is a flavoprotein, the beta component is a hemoprotein. FAD is required as a cofactor. FMN serves as cofactor.

The enzyme catalyses hydrogen sulfide + 3 NADP(+) + 3 H2O = sulfite + 3 NADPH + 4 H(+). The protein operates within sulfur metabolism; hydrogen sulfide biosynthesis; hydrogen sulfide from sulfite (NADPH route): step 1/1. Component of the sulfite reductase complex that catalyzes the 6-electron reduction of sulfite to sulfide. This is one of several activities required for the biosynthesis of L-cysteine from sulfate. The flavoprotein component catalyzes the electron flow from NADPH -&gt; FAD -&gt; FMN to the hemoprotein component. This Escherichia coli O9:H4 (strain HS) protein is Sulfite reductase [NADPH] flavoprotein alpha-component.